Reading from the N-terminus, the 491-residue chain is MKIEEMTIMDIRKGYVQKQFTVKDVVQGYIDRIKELDGKINAFITLCEESALMEAAVLDEKLSRGEEIGLLGGIPVAIKDNMCTQGIKTSCASEMLADFIPPYDATIVKKLRAAGAIIIGKTNMDEFAMGSSTENSAFKVTKNPWDLTKVPGGSSGGSAAALAAGFAPLTIGSDTGGSIRQPAAFCGTVGLKPTYGLVSRFGLIAFASSLDQIGPFTKTVKDCALSLQVMQGNDPLDSTSIQQEPMDDYVKDLDKGVKGLKVGIPKEFFQEGLNIEISDSIKEAIKVLEQLGAVVEEFSLPVTDSGLSAYYIISSAEASSNLARYDGVRYGHRAAVYEGIEEMMLNSRSEGFGKEVKRRIMLGTYVLSSGYYDAYYKKAMDFRKKTRNVFKKAFESYDVILTPTSPVLPFTIGEKTGDPLEMYLADIYTVNVNIAGVPAISIPCGFSKEKLPIGLQLIGDHYSEKKLLQAAYGLEQELGIFKEMPQQREVK.

Active-site charge relay system residues include Lys-79 and Ser-154. The active-site Acyl-ester intermediate is Ser-178.

It belongs to the amidase family. GatA subfamily. In terms of assembly, heterotrimer of A, B and C subunits.

It catalyses the reaction L-glutamyl-tRNA(Gln) + L-glutamine + ATP + H2O = L-glutaminyl-tRNA(Gln) + L-glutamate + ADP + phosphate + H(+). Allows the formation of correctly charged Gln-tRNA(Gln) through the transamidation of misacylated Glu-tRNA(Gln) in organisms which lack glutaminyl-tRNA synthetase. The reaction takes place in the presence of glutamine and ATP through an activated gamma-phospho-Glu-tRNA(Gln). This Alkaliphilus metalliredigens (strain QYMF) protein is Glutamyl-tRNA(Gln) amidotransferase subunit A.